The following is a 349-amino-acid chain: Cdc42 effector protein 4 (349 aa).

K5 is subject to N6-methyllysine. Residue S18 is modified to Phosphoserine. Positions 27-41 (ISAPLGDFRHTMHVG) constitute a CRIB domain. 4 positions are modified to phosphoserine: S64, S103, S107, and S116. Positions 123 to 132 (KEAAEKDSSK) are enriched in basic and acidic residues. Disordered stretches follow at residues 123–172 (KEAA…LLDE), 220–240 (QWGSEEEEEAGGYRDKEGPSS), and 278–349 (GWAV…EIRV). 8 positions are modified to phosphoserine: S136, S138, S140, S154, S165, S223, S285, and S288. Residues 280-308 (AVVAPSPSSARSVGSHTTRDSSSLSSYTS) show a composition bias toward low complexity. Residues 311-322 (LEERSPAFRGPD) are compositionally biased toward basic and acidic residues. A compositionally biased stretch (acidic residues) spans 338-349 (FMDEEEEDEIRV).

Belongs to the BORG/CEP family. In terms of assembly, interacts with CDC42 and RHOQ, in a GTP-dependent manner. Ubiquitous.

The protein resides in the endomembrane system. It localises to the cytoplasm. It is found in the cytoskeleton. Its function is as follows. Probably involved in the organization of the actin cytoskeleton. May act downstream of CDC42 to induce actin filament assembly leading to cell shape changes. Induces pseudopodia formation, when overexpressed in fibroblasts. The sequence is that of Cdc42 effector protein 4 (Cdc42ep4) from Mus musculus (Mouse).